We begin with the raw amino-acid sequence, 506 residues long: Histidine ammonia-lyase (506 aa).

The 5-imidazolinone (Ala-Gly) cross-link spans 144 to 146 (ASG). Ser145 carries the post-translational modification 2,3-didehydroalanine (Ser).

This sequence belongs to the PAL/histidase family. In terms of processing, contains an active site 4-methylidene-imidazol-5-one (MIO), which is formed autocatalytically by cyclization and dehydration of residues Ala-Ser-Gly.

The protein resides in the cytoplasm. It catalyses the reaction L-histidine = trans-urocanate + NH4(+). Its pathway is amino-acid degradation; L-histidine degradation into L-glutamate; N-formimidoyl-L-glutamate from L-histidine: step 1/3. The sequence is that of Histidine ammonia-lyase from Legionella pneumophila (strain Lens).